Reading from the N-terminus, the 254-residue chain is Ribonuclease HII (254 aa).

One can recognise an RNase H type-2 domain in the interval 70–254; it reads RYICGIDEVG…ASFIKNLTSC (185 aa). Residues Asp76, Glu77, and Asp168 each coordinate a divalent metal cation.

The protein belongs to the RNase HII family. Requires Mn(2+) as cofactor. Mg(2+) serves as cofactor.

It is found in the cytoplasm. The catalysed reaction is Endonucleolytic cleavage to 5'-phosphomonoester.. Its function is as follows. Endonuclease that specifically degrades the RNA of RNA-DNA hybrids. This chain is Ribonuclease HII, found in Lachnoclostridium phytofermentans (strain ATCC 700394 / DSM 18823 / ISDg) (Clostridium phytofermentans).